Consider the following 291-residue polypeptide: MFIIELIKGIILGVVEGLTEFAPVSSTGHMILVDDMWLKSSEFLGSQSAFTFKIVIQLGSVFAAAWVFRERFLEILHIGKHKHVEGQNDQQRRSKPRRLNLLHVLVGMVPAGILGLLFDDFIEEHLFSVPTVMIGLFVGAIYMIIADKYSVKVKNPQTVDQINYFQAFVIGISQAVAMWPGFSRSGSTISTGVLMKLNHKAASDFTFIMAVPIMLAASGLSLLKHYQDIQIADIPFYILGFLAAFTVGLIAIKTFLHLINKIKLIPFAIYRIVLVIFIAILYFGFGIGKGI.

8 consecutive transmembrane segments (helical) span residues 1-21 (MFII…LTEF), 48-68 (SAFT…AWVF), 102-122 (LHVL…DDFI), 126-146 (LFSV…MIIA), 162-182 (INYF…WPGF), 203-223 (SDFT…LSLL), 231-251 (IADI…GLIA), and 267-287 (FAIY…GFGI).

The protein belongs to the UppP family.

The protein resides in the cell membrane. The catalysed reaction is di-trans,octa-cis-undecaprenyl diphosphate + H2O = di-trans,octa-cis-undecaprenyl phosphate + phosphate + H(+). Functionally, catalyzes the dephosphorylation of undecaprenyl diphosphate (UPP). Confers resistance to bacitracin. This Staphylococcus aureus (strain bovine RF122 / ET3-1) protein is Undecaprenyl-diphosphatase.